A 342-amino-acid polypeptide reads, in one-letter code: tRNA N6-adenosine threonylcarbamoyltransferase (342 aa).

Residues His-115 and His-119 each contribute to the Fe cation site. Residues 138–142, Asp-171, Gly-184, and Asn-276 each bind substrate; that span reads LVSGG. A Fe cation-binding site is contributed by Asp-304.

It belongs to the KAE1 / TsaD family. Requires Fe(2+) as cofactor.

Its subcellular location is the cytoplasm. The enzyme catalyses L-threonylcarbamoyladenylate + adenosine(37) in tRNA = N(6)-L-threonylcarbamoyladenosine(37) in tRNA + AMP + H(+). Required for the formation of a threonylcarbamoyl group on adenosine at position 37 (t(6)A37) in tRNAs that read codons beginning with adenine. Is involved in the transfer of the threonylcarbamoyl moiety of threonylcarbamoyl-AMP (TC-AMP) to the N6 group of A37, together with TsaE and TsaB. TsaD likely plays a direct catalytic role in this reaction. This Dichelobacter nodosus (strain VCS1703A) protein is tRNA N6-adenosine threonylcarbamoyltransferase.